Consider the following 141-residue polypeptide: Hemoglobin subunit alpha (141 aa).

Residues 1 to 141 enclose the Globin domain; that stretch reads VLSPADKTNV…VSTVLTSKYR (141 aa). Residue Ser-3 is modified to Phosphoserine. Lys-7 is modified (N6-succinyllysine). A Phosphothreonine modification is found at Thr-8. N6-succinyllysine is present on Lys-11. Lys-16 carries the N6-acetyllysine; alternate modification. Lys-16 carries the N6-succinyllysine; alternate modification. Tyr-24 bears the Phosphotyrosine mark. Ser-35 is subject to Phosphoserine. Lys-40 carries the post-translational modification N6-succinyllysine. Ser-49 is modified (phosphoserine). His-58 contacts O2. His-87 contacts heme b. Phosphoserine is present on Ser-102. Thr-108 carries the phosphothreonine modification. Ser-124 and Ser-131 each carry phosphoserine. Residues Thr-134 and Thr-137 each carry the phosphothreonine modification. Ser-138 is subject to Phosphoserine.

Belongs to the globin family. As to quaternary structure, heterotetramer of two alpha chains and two beta chains. In terms of tissue distribution, red blood cells.

In terms of biological role, involved in oxygen transport from the lung to the various peripheral tissues. Hemopressin acts as an antagonist peptide of the cannabinoid receptor CNR1. Hemopressin-binding efficiently blocks cannabinoid receptor CNR1 and subsequent signaling. In Cebus capucinus (White-faced sapajou), this protein is Hemoglobin subunit alpha (HBA).